The chain runs to 369 residues: tRNA-specific 2-thiouridylase MnmA (369 aa).

Residues 12–19 (GMSGGVDS) and M38 contribute to the ATP site. Residues 98 to 100 (NPD) form an interaction with target base in tRNA region. The Nucleophile role is filled by C103. C103 and C200 are joined by a disulfide. G128 contacts ATP. The interaction with tRNA stretch occupies residues 150–152 (KDQ). The active-site Cysteine persulfide intermediate is the C200. The interaction with tRNA stretch occupies residues 312-313 (RY).

Belongs to the MnmA/TRMU family. Interacts with TusE.

It localises to the cytoplasm. It catalyses the reaction S-sulfanyl-L-cysteinyl-[protein] + uridine(34) in tRNA + AH2 + ATP = 2-thiouridine(34) in tRNA + L-cysteinyl-[protein] + A + AMP + diphosphate + H(+). In terms of biological role, catalyzes the 2-thiolation of uridine at the wobble position (U34) of tRNA(Lys), tRNA(Glu) and tRNA(Gln), leading to the formation of s(2)U34, the first step of tRNA-mnm(5)s(2)U34 synthesis. Sulfur is provided by IscS, via a sulfur-relay system. Binds ATP and its substrate tRNAs. The sequence is that of tRNA-specific 2-thiouridylase MnmA from Sodalis glossinidius (strain morsitans).